An 89-amino-acid chain; its full sequence is Dolichol-phosphate mannose synthase subunit 3 (89 aa).

2 helical membrane-spanning segments follow: residues 7–27 (ILSL…AAII) and 33–53 (WLLP…MVGV).

It belongs to the DPM3 family. In terms of assembly, component of the dolichol-phosphate mannose (DPM) synthase complex composed of DPMS1, DPMS2 and DPMS3; in the complex interacts directly with DPMS1 and DPMS2.

It is found in the endoplasmic reticulum membrane. Its pathway is protein modification; protein glycosylation. Its function is as follows. Regulates the biosynthesis of dolichol phosphate-mannose. Regulatory subunit of the dolichol-phosphate mannose (DPM) synthase complex; essential for the ER localization and stable expression of DPMS1. The polypeptide is Dolichol-phosphate mannose synthase subunit 3 (Arabidopsis thaliana (Mouse-ear cress)).